The primary structure comprises 314 residues: Hydroxyacyl-coenzyme A dehydrogenase, mitochondrial (314 aa).

The N-terminal 12 residues, Met1 to Leu12, are a transit peptide targeting the mitochondrion. NAD(+) contacts are provided by residues Gly34–Gly39 and Asp57. The CoA site is built by Ser73 and Lys80. The residue at position 80 (Lys80) is an N6-succinyllysine. Lys81 and Lys87 each carry N6-acetyllysine; alternate. N6-succinyllysine; alternate occurs at positions 81 and 87. Residue Glu122 participates in NAD(+) binding. N6-acetyllysine is present on Lys125. Lys127 lines the NAD(+) pocket. Residue Lys127 is modified to N6-(2-hydroxyisobutyryl)lysine. The residue at position 136 (Lys136) is an N6-acetyllysine; alternate. Residue Lys136 is modified to N6-succinyllysine; alternate. Ser149 and Asn173 together coordinate NAD(+). CoA is bound at residue Ser149. An N6-acetyllysine modification is found at Lys179. 3 positions are modified to N6-acetyllysine; alternate: Lys185, Lys192, and Lys202. Lys185, Lys192, and Lys202 each carry N6-succinyllysine; alternate. Lys206 carries the N6-succinyllysine modification. N6-acetyllysine; alternate occurs at positions 212 and 241. Residues Lys212 and Lys241 each carry the N6-succinyllysine; alternate modification. Lys305 contacts NAD(+). Lys312 is subject to N6-acetyllysine; alternate. Lys312 carries the post-translational modification N6-succinyllysine; alternate.

Belongs to the 3-hydroxyacyl-CoA dehydrogenase family. As to quaternary structure, homodimer. Interacts with GLUD1; this interaction inhibits the activation of glutamate dehydrogenase 1 (GLUD1). Post-translationally, succinylation at Lys-81, adjacent to a coenzyme A binding site. Desuccinylated by SIRT5.

It is found in the mitochondrion matrix. The enzyme catalyses a (3S)-3-hydroxyacyl-CoA + NAD(+) = a 3-oxoacyl-CoA + NADH + H(+). The catalysed reaction is (3S)-3-hydroxybutanoyl-CoA + NAD(+) = acetoacetyl-CoA + NADH + H(+). It catalyses the reaction (3S)-hydroxydecanoyl-CoA + NAD(+) = 3-oxodecanoyl-CoA + NADH + H(+). It carries out the reaction (3S)-hydroxyhexadecanoyl-CoA + NAD(+) = 3-oxohexadecanoyl-CoA + NADH + H(+). The protein operates within lipid metabolism; fatty acid beta-oxidation. Its function is as follows. Mitochondrial fatty acid beta-oxidation enzyme that catalyzes the third step of the beta-oxidation cycle for medium and short-chain 3-hydroxy fatty acyl-CoAs (C4 to C10). Plays a role in the control of insulin secretion by inhibiting the activation of glutamate dehydrogenase 1 (GLUD1), an enzyme that has an important role in regulating amino acid-induced insulin secretion. Plays a role in the maintenance of normal spermatogenesis through the reduction of fatty acid accumulation in the testes. This is Hydroxyacyl-coenzyme A dehydrogenase, mitochondrial (HADH) from Sus scrofa (Pig).